Reading from the N-terminus, the 240-residue chain is Glutathione S-transferase omega-1 (240 aa).

Serine 2 is modified (N-acetylserine). The 80-residue stretch at 22–101 folds into the GST N-terminal domain; it reads GQIRVYSMRF…YLDEAYPEKK (80 aa). The active-site Nucleophile is the cysteine 32. Lysine 57 bears the N6-acetyllysine mark. Residues lysine 59, valine 72, and 85–86 contribute to the glutathione site; that span reads ES. The GST C-terminal domain maps to 106–227; it reads DPYKKARQKM…AKTYREYLNL (122 aa). At serine 129 the chain carries Phosphoserine. Lysine 152 is subject to N6-acetyllysine.

This sequence belongs to the GST superfamily. Omega family. As to quaternary structure, homodimer.

The protein localises to the cytoplasm. Its subcellular location is the cytosol. The enzyme catalyses RX + glutathione = an S-substituted glutathione + a halide anion + H(+). It catalyses the reaction L-dehydroascorbate + 2 glutathione = glutathione disulfide + L-ascorbate. The catalysed reaction is methylarsonate + 2 glutathione + H(+) = methylarsonous acid + glutathione disulfide + H2O. In terms of biological role, exhibits glutathione-dependent thiol transferase and dehydroascorbate reductase activities. Has S-(phenacyl)glutathione reductase activity. Also has glutathione S-transferase activity. Participates in the biotransformation of inorganic arsenic and reduces monomethylarsonic acid (MMA) and dimethylarsonic acid. The polypeptide is Glutathione S-transferase omega-1 (Gsto1) (Mus musculus (Mouse)).